We begin with the raw amino-acid sequence, 617 residues long: Probable Xaa-Pro aminopeptidase P (617 aa).

Residues Asp-414, Asp-425, Glu-523, and Glu-537 each contribute to the Mn(2+) site.

This sequence belongs to the peptidase M24B family. Mn(2+) serves as cofactor.

The catalysed reaction is Release of any N-terminal amino acid, including proline, that is linked to proline, even from a dipeptide or tripeptide.. Its function is as follows. Catalyzes the removal of a penultimate prolyl residue from the N-termini of peptides. This chain is Probable Xaa-Pro aminopeptidase P (AMPP), found in Ajellomyces capsulatus (strain NAm1 / WU24) (Darling's disease fungus).